A 722-amino-acid chain; its full sequence is A-type ATP synthase subunit I (722 aa).

A compositionally biased stretch (basic and acidic residues) spans 309–321 (DYKPTGHDQHVPA). A disordered region spans residues 309-352 (DYKPTGHDQHVPADDGADAATDGGTTASFDETDSPPVIQDNPGP). Low complexity predominate over residues 326-335 (DAATDGGTTA). The next 8 membrane-spanning stretches (helical) occupy residues 384–404 (FYGFMIGDLGYGVLYALLGFW), 419–439 (GVAMWAGGFTALFGVLYGEVF), 474–494 (LAASLVFGIAHLAIGYVFGFV), 505–525 (AALESGGQLLLMAGVGVWLFS), 554–574 (LAAAVVGLVLVTLGEGAAGFL), 590–610 (IAAVLLAKAGMAYVVNLLVFG), 639–659 (FMLFSGEAHGEVLFPGLMHMG), and 662–682 (GILIGVLVLLVGHALVLALGV).

This sequence belongs to the V-ATPase 116 kDa subunit family. As to quaternary structure, has multiple subunits with at least A(3), B(3), C, D, E, F, H, I and proteolipid K(x).

Its subcellular location is the cell membrane. Component of the A-type ATP synthase that produces ATP from ADP in the presence of a proton gradient across the membrane. The sequence is that of A-type ATP synthase subunit I from Halobacterium salinarum (strain ATCC 700922 / JCM 11081 / NRC-1) (Halobacterium halobium).